The chain runs to 53 residues: Large ribosomal subunit protein eL40 (53 aa).

It belongs to the eukaryotic ribosomal protein eL40 family.

The sequence is that of Large ribosomal subunit protein eL40 from Pyrobaculum islandicum (strain DSM 4184 / JCM 9189 / GEO3).